The primary structure comprises 451 residues: Putative metabolite transport protein YyaJ (451 aa).

Topologically, residues 1–29 (MNTIFKQKNTHPFSNAANRLDRLPISRVH) are cytoplasmic. A helical transmembrane segment spans residues 30 to 50 (FQVLTALGIVYFFDLADLFTL). Residues 51–60 (SNVAPALIEH) lie on the Extracellular side of the membrane. Residues 61-81 (WGIPLSTIANVTAASFLGMFL) traverse the membrane as a helical segment. The Cytoplasmic segment spans residues 82–97 (GASLGGRLSDRIGRKK). The chain crosses the membrane as a helical span at residues 98 to 118 (ALNLFVFVFSIASLCNAAAWD). The Extracellular portion of the chain corresponds to 119 to 124 (IPSLMT). Residues 125-145 (FRFLTGFGVAAAMVITNSYLA) form a helical membrane-spanning segment. At 146 to 157 (EFFPSSVRGKYI) the chain is on the cytoplasmic side. The helical transmembrane segment at 158-178 (SFCAMIGLIGVPITNIVSAFV) threads the bilayer. Topologically, residues 179 to 182 (IPLG) are extracellular. A helical transmembrane segment spans residues 183-203 (SWGWRLVFVWGAVGLIYFFFI). Residues 204–270 (HRLEESPRWH…LLKGRNLKIT (67 aa)) are Cytoplasmic-facing. The helical transmembrane segment at 271-291 (IVLSAVWIFETFGFYGFASWV) threads the bilayer. Residues 292 to 305 (PSLLKSNGVTMENT) lie on the Extracellular side of the membrane. The chain crosses the membrane as a helical span at residues 306-326 (LWYNVLHSVGAPLGALLGSMI). Topologically, residues 327-333 (SERFQRK) are cytoplasmic. The helical transmembrane segment at 334-354 (WILAASAFLTAIAGLLYGMTF) threads the bilayer. Over 355 to 357 (IPI) the chain is Extracellular. Residues 358–378 (MIIVFGFIVNITERVFTSNLY) form a helical membrane-spanning segment. Over 379–396 (AYTSEPYPTEYRSSGSGL) the chain is Cytoplasmic. A helical transmembrane segment spans residues 397-417 (AYGLGRFSNIFGSLLVGFIAV). Over 418-421 (QLGY) the chain is Extracellular. Residues 422-442 (ISVFLFIGGCWLACSLLLIFF) traverse the membrane as a helical segment. The Cytoplasmic segment spans residues 443 to 451 (GPNTNAKQI).

The protein belongs to the major facilitator superfamily. Sugar transporter (TC 2.A.1.1) family.

It is found in the cell membrane. This is Putative metabolite transport protein YyaJ (yyaJ) from Bacillus subtilis (strain 168).